The following is a 157-amino-acid chain: Large ribosomal subunit protein uL15 (157 aa).

The disordered stretch occupies residues 1 to 40; that stretch reads MKLHELSDNPGATKKRMRIGRGPGSGKGKMGGRGIKGQKS. Over residues 21–35 the composition is skewed to gly residues; sequence RGPGSGKGKMGGRGI.

This sequence belongs to the universal ribosomal protein uL15 family. In terms of assembly, part of the 50S ribosomal subunit.

Binds to the 23S rRNA. The sequence is that of Large ribosomal subunit protein uL15 from Ruegeria pomeroyi (strain ATCC 700808 / DSM 15171 / DSS-3) (Silicibacter pomeroyi).